Reading from the N-terminus, the 70-residue chain is U2-agatoxin-Ao1r (70 aa).

Residues 1–20 form the signal peptide; it reads MRSIISLILISAMVFSMIAP. Positions 21–34 are excised as a propeptide; sequence VPEEERLQLSEDER. Intrachain disulfides connect Cys-37–Cys-53, Cys-44–Cys-58, and Cys-52–Cys-68. Leu-69 is subject to Leucine amide.

This sequence belongs to the neurotoxin 01 (U2-agtx) family. In terms of tissue distribution, expressed by the venom gland.

The protein resides in the secreted. Functionally, insect active toxin causing rapid but reversible paralysis in crickets. No activity shown in mammals. Does not show effect on mammalian voltage-gated calcium channels. This chain is U2-agatoxin-Ao1r, found in Agelena orientalis (Funnel-web spider).